Here is a 1031-residue protein sequence, read N- to C-terminus: LRR receptor-like serine/threonine-protein kinase EFR (1031 aa).

The first 24 residues, 1–24 (MKLSFSLVFNALTLLLQVCIFAQA), serve as a signal peptide directing secretion. Over 25-653 (RFSNETDMQA…LSVRKKVVSG (629 aa)) the chain is Extracellular. N-linked (GlcNAc...) asparagine glycans are attached at residues Asn-28, Asn-55, and Asn-95. LRR repeat units lie at residues 98 to 120 (FLRL…VGRL), 122 to 144 (RLQY…LSNC), 146 to 168 (RLST…LGSL), 170 to 193 (KLAI…GNLT), 194 to 216 (SLQK…VARL), 218 to 240 (QMVF…LYNI), 242 to 264 (SLES…FGYL), 267 to 289 (NLRR…LANI), 291 to 312 (SLER…SFGK), and 315 to 335 (NLWW…SGLE). Asn-127 and Asn-143 each carry an N-linked (GlcNAc...) asparagine glycan. N-linked (GlcNAc...) asparagine glycans are attached at residues Asn-180 and Asn-191. A glycan (N-linked (GlcNAc...) asparagine) is linked at Asn-239. An N-linked (GlcNAc...) asparagine glycan is attached at Asn-288. Asn-323, Asn-329, Asn-342, and Asn-366 each carry an N-linked (GlcNAc...) asparagine glycan. LRR repeat units follow at residues 345–368 (QLEY…ANLS), 370–392 (TLTS…IGNL), 394–416 (SLQE…FGKL), 418–440 (NLQV…FGNM), 442–464 (RLQK…LGRC), 466–487 (YLLD…EILQ), 490–512 (SLAY…VGKL), 514–536 (LLVG…IGGC), 538–560 (SMEF…SRLV), 561–584 (SLKN…ASLP), and 585–597 (SLRN…NKFE). N-linked (GlcNAc...) asparagine glycosylation occurs at Asn-439. Residue Asn-478 is glycosylated (N-linked (GlcNAc...) asparagine). Residues Asn-571, Asn-590, and Asn-608 are each glycosylated (N-linked (GlcNAc...) asparagine). The chain crosses the membrane as a helical span at residues 654–674 (ICIGIASLLLIIIVASLCWFM). The Cytoplasmic segment spans residues 675 to 1031 (KRKKKNNASD…WMLNTDMHTM (357 aa)). Thr-709 carries the phosphothreonine modification. The Protein kinase domain maps to 712 to 1001 (FSSTNLIGSG…ELISIRSKFF (290 aa)). ATP-binding positions include 718-726 (IGSGNFGNV) and Lys-741. Residues Tyr-791 and Tyr-836 each carry the phosphotyrosine modification. Residue Asp-849 is the Proton acceptor of the active site. A Phosphotyrosine modification is found at Tyr-897. Positions 1005–1020 (TTITESPRDAPQSSPQ) are enriched in polar residues. The disordered stretch occupies residues 1005–1031 (TTITESPRDAPQSSPQEWMLNTDMHTM).

Belongs to the protein kinase superfamily. Ser/Thr protein kinase family. In terms of assembly, binds to Pseudomonas syringae AvrPto1 and (via the kinase and cytoplasmic domains) to hopD2. Interacts with SERK3/BAK1, SERK4/BKK1, SERK1 and SERK2 in a specific ligand-induced manner. Binds to IOS1. Binds to BIK1 in the absence of pathogen elicitor; dissociates upon pathogen-associated molecular pattern (PAMP)-triggered activation. In terms of processing, autophosphorylated after elicitation with elfl18. Autophosphorylation is inhibited by the binding with avrPto1. Phosphorylation at T-836 is required for immune signaling. Post-translationally, polyubiquitinated at the kinase domain mediated by P.syringae AvrPtoB.

Its subcellular location is the cell membrane. It localises to the endomembrane system. It carries out the reaction L-seryl-[protein] + ATP = O-phospho-L-seryl-[protein] + ADP + H(+). The catalysed reaction is L-threonyl-[protein] + ATP = O-phospho-L-threonyl-[protein] + ADP + H(+). In terms of biological role, constitutes the pattern-recognition receptor (PPR) that determines the specific perception of elongation factor Tu (EF-Tu), a potent elicitor of the defense response to pathogen-associated molecular patterns (PAMPs); phosphorylates BIK1 upon elicitation to regulate immune responses such as defense hormone expression (e.g. jasmonic acid (JA) and salicylic acid (SA)). Reduces transformation by Rhizobium radiobacter probably by inducing plant defense during the interaction. Binding to the effector AvrPto1 from P.syringae blocks the downstream plant immune response while interaction with hopD2 decreases the phosphorylation level of EFR upon elf18 treatment. Specific endoplasmic reticulum quality control components (ERD2B, CRT3, UGGT and STT3A) are required for the biogenesis of EFR. This chain is LRR receptor-like serine/threonine-protein kinase EFR, found in Arabidopsis thaliana (Mouse-ear cress).